The chain runs to 408 residues: CinA-like protein (408 aa).

The protein belongs to the CinA family.

The chain is CinA-like protein from Anaeromyxobacter sp. (strain K).